The primary structure comprises 393 residues: Cytochrome b (393 aa).

The next 4 membrane-spanning stretches (helical) occupy residues 32-52, 76-98, 113-133, and 179-199; these read FGSL…FLAM, WLIR…LHIG, LWSI…LGYV, and FFSL…MHLL. Heme b-binding residues include His82 and His96. Heme b contacts are provided by His183 and His197. His202 serves as a coordination point for a ubiquinone. The next 4 membrane-spanning stretches (helical) occupy residues 225 to 245, 289 to 309, 321 to 341, and 348 to 368; these read FTFK…LFVF, LIGV…PILD, LMRF…FIGS, and YVEI…VVVP.

It belongs to the cytochrome b family. In terms of assembly, fungal cytochrome b-c1 complex contains 10 subunits; 3 respiratory subunits, 2 core proteins and 5 low-molecular weight proteins. Cytochrome b-c1 complex is a homodimer. The cofactor is heme b.

The protein localises to the mitochondrion inner membrane. In terms of biological role, component of the ubiquinol-cytochrome c reductase complex (complex III or cytochrome b-c1 complex) that is part of the mitochondrial respiratory chain. The b-c1 complex mediates electron transfer from ubiquinol to cytochrome c. Contributes to the generation of a proton gradient across the mitochondrial membrane that is then used for ATP synthesis. The chain is Cytochrome b (COB) from Mycosarcoma maydis (Corn smut fungus).